Consider the following 414-residue polypeptide: Serine/threonine transporter SstT (414 aa).

8 consecutive transmembrane segments (helical) span residues 16 to 36 (GSLV…AWIS), 46 to 66 (LGTL…LMLV), 84 to 104 (ILFL…VFSF), 143 to 163 (ALLN…GFAL), 180 to 200 (AVTF…FGLV), 219 to 239 (LVVL…LLVF), 300 to 320 (MAGA…TLGV), and 332 to 352 (VVAS…LLLI).

Belongs to the dicarboxylate/amino acid:cation symporter (DAACS) (TC 2.A.23) family.

The protein localises to the cell inner membrane. It carries out the reaction L-serine(in) + Na(+)(in) = L-serine(out) + Na(+)(out). The enzyme catalyses L-threonine(in) + Na(+)(in) = L-threonine(out) + Na(+)(out). In terms of biological role, involved in the import of serine and threonine into the cell, with the concomitant import of sodium (symport system). The polypeptide is Serine/threonine transporter SstT (Salmonella heidelberg (strain SL476)).